A 222-amino-acid polypeptide reads, in one-letter code: Probable transaldolase (222 aa).

Lys-83 (schiff-base intermediate with substrate) is an active-site residue.

It belongs to the transaldolase family. Type 3B subfamily.

The protein resides in the cytoplasm. It carries out the reaction D-sedoheptulose 7-phosphate + D-glyceraldehyde 3-phosphate = D-erythrose 4-phosphate + beta-D-fructose 6-phosphate. It functions in the pathway carbohydrate degradation; pentose phosphate pathway; D-glyceraldehyde 3-phosphate and beta-D-fructose 6-phosphate from D-ribose 5-phosphate and D-xylulose 5-phosphate (non-oxidative stage): step 2/3. Its function is as follows. Transaldolase is important for the balance of metabolites in the pentose-phosphate pathway. This is Probable transaldolase from Nitrosopumilus maritimus (strain SCM1).